A 318-amino-acid chain; its full sequence is HPr kinase/phosphorylase (318 aa).

Active-site residues include H141 and K162. 156–163 provides a ligand contact to ATP; it reads GDSAMGKS. Position 163 (S163) interacts with Mg(2+). D180 acts as the Proton acceptor; for phosphorylation activity. Proton donor; for dephosphorylation activity in catalysis. Residues 204 to 213 are important for the catalytic mechanism of both phosphorylation and dephosphorylation; it reads LEVRGLGILN. E205 contributes to the Mg(2+) binding site. R248 is a catalytic residue. Residues 269 to 274 form an important for the catalytic mechanism of dephosphorylation region; the sequence is PVAAGR.

It belongs to the HPrK/P family. As to quaternary structure, homohexamer. Requires Mg(2+) as cofactor.

It catalyses the reaction [HPr protein]-L-serine + ATP = [HPr protein]-O-phospho-L-serine + ADP + H(+). It carries out the reaction [HPr protein]-O-phospho-L-serine + phosphate + H(+) = [HPr protein]-L-serine + diphosphate. In terms of biological role, catalyzes the ATP- as well as the pyrophosphate-dependent phosphorylation of a specific serine residue in HPr, a phosphocarrier protein of the phosphoenolpyruvate-dependent sugar phosphotransferase system (PTS). HprK/P also catalyzes the pyrophosphate-producing, inorganic phosphate-dependent dephosphorylation (phosphorolysis) of seryl-phosphorylated HPr (P-Ser-HPr). The sequence is that of HPr kinase/phosphorylase from Chromobacterium violaceum (strain ATCC 12472 / DSM 30191 / JCM 1249 / CCUG 213 / NBRC 12614 / NCIMB 9131 / NCTC 9757 / MK).